The primary structure comprises 105 residues: DNA-binding protein HU (105 aa).

Belongs to the bacterial histone-like protein family.

In terms of biological role, histone-like DNA-binding protein which is capable of wrapping DNA to stabilize it, and thus to prevent its denaturation under extreme environmental conditions. The polypeptide is DNA-binding protein HU (hup) (Treponema pallidum (strain Nichols)).